Here is a 411-residue protein sequence, read N- to C-terminus: MTAQTPIHVYSEIGKLKKVLLHRPGKEIENLMPDYLERLLFDDIPFLEDAQKEHDAFAQALRDEGIEVLYLETLAAESLVTPEIREAFIDEYLSEANIRGRATKKAIRELLMAIEDNQELIEKTMAGVQKSELPEIPASEKGLTDLVESNYPFAIDPMPNLYFTRDPFATIGTGVSLNHMFSETRNRETLYGKYIFTHHPIYGGGKVPMVYDRNETTRIEGGDELVLSKDVLAVGISQRTDAASIEKLLVNIFKQNLGFKKVLAFEFANNRKFMHLDTVFTMVDYDKFTIHPEIEGDLRVYSVTYDNEELHIIEEKGDLAELLAANLGVEKVDLIRCGGDNLVAAGREQWNDGSNTLTIAPGVVVVYNRNTITNAILESKGLKLIKIHGSELVRGRGGPRCMSMPFEREDI.

Cys401 acts as the Amidino-cysteine intermediate in catalysis.

This sequence belongs to the arginine deiminase family.

Its subcellular location is the cytoplasm. It catalyses the reaction L-arginine + H2O = L-citrulline + NH4(+). It functions in the pathway amino-acid degradation; L-arginine degradation via ADI pathway; carbamoyl phosphate from L-arginine: step 1/2. This Streptococcus pyogenes serotype M2 (strain MGAS10270) protein is Arginine deiminase.